Consider the following 242-residue polypeptide: Octanoyltransferase (242 aa).

The region spanning 31-206 (SQTTDEIWFL…LFLKNFGYNQ (176 aa)) is the BPL/LPL catalytic domain. Residues 70–77 (RGGQVTYH), 137–139 (SIG), and 150–152 (GLA) each bind substrate. The active-site Acyl-thioester intermediate is C168.

The protein belongs to the LipB family.

The protein resides in the cytoplasm. It carries out the reaction octanoyl-[ACP] + L-lysyl-[protein] = N(6)-octanoyl-L-lysyl-[protein] + holo-[ACP] + H(+). It participates in protein modification; protein lipoylation via endogenous pathway; protein N(6)-(lipoyl)lysine from octanoyl-[acyl-carrier-protein]: step 1/2. Functionally, catalyzes the transfer of endogenously produced octanoic acid from octanoyl-acyl-carrier-protein onto the lipoyl domains of lipoate-dependent enzymes. Lipoyl-ACP can also act as a substrate although octanoyl-ACP is likely to be the physiological substrate. The sequence is that of Octanoyltransferase from Coxiella burnetii (strain CbuG_Q212) (Coxiella burnetii (strain Q212)).